The primary structure comprises 277 residues: Small ribosomal subunit protein uS3 (277 aa).

One can recognise a KH type-2 domain in the interval 43-111 (IRELMSKGMD…QIQLNILEVK (69 aa)). The interval 217-277 (AAQQAAAPSS…AEANNAEGGK (61 aa)) is disordered. The segment covering 245–258 (NDRNDRGGRRERDS) has biased composition (basic and acidic residues). A compositionally biased stretch (low complexity) spans 259–277 (AAAPQQNSAAEANNAEGGK).

This sequence belongs to the universal ribosomal protein uS3 family. Part of the 30S ribosomal subunit. Forms a tight complex with proteins S10 and S14.

In terms of biological role, binds the lower part of the 30S subunit head. Binds mRNA in the 70S ribosome, positioning it for translation. In Kocuria rhizophila (strain ATCC 9341 / DSM 348 / NBRC 103217 / DC2201), this protein is Small ribosomal subunit protein uS3.